Reading from the N-terminus, the 1070-residue chain is DNA-directed RNA polymerase subunit beta (1070 aa).

Belongs to the RNA polymerase beta chain family. In terms of assembly, in plastids the minimal PEP RNA polymerase catalytic core is composed of four subunits: alpha, beta, beta', and beta''. When a (nuclear-encoded) sigma factor is associated with the core the holoenzyme is formed, which can initiate transcription.

It localises to the plastid. The protein resides in the chloroplast. The catalysed reaction is RNA(n) + a ribonucleoside 5'-triphosphate = RNA(n+1) + diphosphate. DNA-dependent RNA polymerase catalyzes the transcription of DNA into RNA using the four ribonucleoside triphosphates as substrates. The polypeptide is DNA-directed RNA polymerase subunit beta (Morus indica (Mulberry)).